Here is a 286-residue protein sequence, read N- to C-terminus: Bifunctional protein FolD (286 aa).

NADP(+) is bound by residues G166–S168 and I232.

This sequence belongs to the tetrahydrofolate dehydrogenase/cyclohydrolase family. Homodimer.

The enzyme catalyses (6R)-5,10-methylene-5,6,7,8-tetrahydrofolate + NADP(+) = (6R)-5,10-methenyltetrahydrofolate + NADPH. It carries out the reaction (6R)-5,10-methenyltetrahydrofolate + H2O = (6R)-10-formyltetrahydrofolate + H(+). It participates in one-carbon metabolism; tetrahydrofolate interconversion. In terms of biological role, catalyzes the oxidation of 5,10-methylenetetrahydrofolate to 5,10-methenyltetrahydrofolate and then the hydrolysis of 5,10-methenyltetrahydrofolate to 10-formyltetrahydrofolate. This chain is Bifunctional protein FolD, found in Vibrio campbellii (strain ATCC BAA-1116).